The chain runs to 243 residues: MSKTHFGFQSVDEQDKAQKVAGVFHSVAANYDLMNDLMSGGLHRAWKMFTIAQANVRPGYKVLDIAGGTGDLSKAFAKQAGDTGEVWHTDINESMLRVGRDRLLDKGVITPALLCDAEKIPFPDNYFDVVTVAFGLRNMTHKDVALAEMRRVLKPAGRLLVLEFSKVWDPLKKVYDVYSFKVLPWLGERFAKDAESYQYLAESIRMHPDQETLKTMMEQAGLDGVKYYNLSAGVVALHVGTKY.

Residues T69, D90, and 116–117 (DA) contribute to the S-adenosyl-L-methionine site.

Belongs to the class I-like SAM-binding methyltransferase superfamily. MenG/UbiE family.

The enzyme catalyses a 2-demethylmenaquinol + S-adenosyl-L-methionine = a menaquinol + S-adenosyl-L-homocysteine + H(+). The catalysed reaction is a 2-methoxy-6-(all-trans-polyprenyl)benzene-1,4-diol + S-adenosyl-L-methionine = a 5-methoxy-2-methyl-3-(all-trans-polyprenyl)benzene-1,4-diol + S-adenosyl-L-homocysteine + H(+). The protein operates within quinol/quinone metabolism; menaquinone biosynthesis; menaquinol from 1,4-dihydroxy-2-naphthoate: step 2/2. It functions in the pathway cofactor biosynthesis; ubiquinone biosynthesis. Methyltransferase required for the conversion of demethylmenaquinol (DMKH2) to menaquinol (MKH2) and the conversion of 2-polyprenyl-6-methoxy-1,4-benzoquinol (DDMQH2) to 2-polyprenyl-3-methyl-6-methoxy-1,4-benzoquinol (DMQH2). The sequence is that of Ubiquinone/menaquinone biosynthesis C-methyltransferase UbiE from Paraburkholderia phytofirmans (strain DSM 17436 / LMG 22146 / PsJN) (Burkholderia phytofirmans).